Here is a 599-residue protein sequence, read N- to C-terminus: Thiamine transporter THI72 (599 aa).

11 consecutive transmembrane segments (helical) span residues 42–62 (WGFW…GMWI), 78–98 (IGAF…NSCP), 112–132 (FVFG…MSIV), 174–194 (LIGF…KPYH), 197–217 (YILI…VIYL), 280–300 (IVAL…GASA), 333–353 (FFCG…NCGF), 372–392 (GAIF…YNSS), 395–415 (FLTV…VMIC), 447–467 (AIVA…WEVN), and 484–504 (SFFS…LFPF). Positions 553–599 (HEYKPESSDDELPELTKTSSENTKVFEIVHQKDNEKESSTSSEKQIA) are disordered. Phosphoserine is present on residues S560 and S572. Over residues 579-590 (EIVHQKDNEKES) the composition is skewed to basic and acidic residues.

Belongs to the purine-cytosine permease (2.A.39) family.

It localises to the membrane. Low affinity thiamine transporter responsible for intake of thiamine. It is possible that the primary function is the uptake of closely related compounds and that thiamine transport is a secondary activity of these proteins. The sequence is that of Thiamine transporter THI72 (THI72) from Saccharomyces cerevisiae (strain ATCC 204508 / S288c) (Baker's yeast).